The primary structure comprises 502 residues: ATP synthase subunit alpha (502 aa).

Residue 169–176 participates in ATP binding; that stretch reads GDRQTGKT.

Belongs to the ATPase alpha/beta chains family. F-type ATPases have 2 components, CF(1) - the catalytic core - and CF(0) - the membrane proton channel. CF(1) has five subunits: alpha(3), beta(3), gamma(1), delta(1), epsilon(1). CF(0) has three main subunits: a(1), b(2) and c(9-12). The alpha and beta chains form an alternating ring which encloses part of the gamma chain. CF(1) is attached to CF(0) by a central stalk formed by the gamma and epsilon chains, while a peripheral stalk is formed by the delta and b chains.

It localises to the cell inner membrane. The catalysed reaction is ATP + H2O + 4 H(+)(in) = ADP + phosphate + 5 H(+)(out). Functionally, produces ATP from ADP in the presence of a proton gradient across the membrane. The alpha chain is a regulatory subunit. The sequence is that of ATP synthase subunit alpha from Desulfovibrio desulfuricans (strain ATCC 27774 / DSM 6949 / MB).